The following is a 293-amino-acid chain: 4-hydroxy-tetrahydrodipicolinate synthase (293 aa).

Residue T45 coordinates pyruvate. The active-site Proton donor/acceptor is Y133. Residue K161 is the Schiff-base intermediate with substrate of the active site. Position 203 (I203) interacts with pyruvate.

Belongs to the DapA family. Homotetramer; dimer of dimers.

The protein localises to the cytoplasm. The catalysed reaction is L-aspartate 4-semialdehyde + pyruvate = (2S,4S)-4-hydroxy-2,3,4,5-tetrahydrodipicolinate + H2O + H(+). The protein operates within amino-acid biosynthesis; L-lysine biosynthesis via DAP pathway; (S)-tetrahydrodipicolinate from L-aspartate: step 3/4. Its function is as follows. Catalyzes the condensation of (S)-aspartate-beta-semialdehyde [(S)-ASA] and pyruvate to 4-hydroxy-tetrahydrodipicolinate (HTPA). This is 4-hydroxy-tetrahydrodipicolinate synthase from Shewanella denitrificans (strain OS217 / ATCC BAA-1090 / DSM 15013).